Consider the following 437-residue polypeptide: Zinc finger CCCH domain-containing protein 40 (437 aa).

The segment at 6–33 (MYKTKLCILFNKTGDCSRPNCTFAHGNA) adopts a C3H1-type zinc-finger fold. The disordered stretch occupies residues 35–107 (LRRPGESSFT…MPFENRRDKD (73 aa)). Basic and acidic residues predominate over residues 48-85 (HNMDSDLRDRRHNMDSDLRDRLGRQFSPERRPSLDRSG). A coiled-coil region spans residues 145 to 244 (NNVLEEQLKD…LGNQLSTYLA (100 aa)). Serine 259 carries the post-translational modification Phosphoserine. 2 disordered regions span residues 266–360 (RNLR…RRRF) and 380–437 (EFDD…DDSV). Over residues 307-319 (RGEEEKVENEKKR) the composition is skewed to basic and acidic residues. Acidic residues-rich tracts occupy residues 333–343 (EEESGAWNDED) and 383–392 (DVAESEEENP). Residues 426 to 437 (MEQKKAYDDDSV) show a composition bias toward basic and acidic residues.

The chain is Zinc finger CCCH domain-containing protein 40 from Arabidopsis thaliana (Mouse-ear cress).